The sequence spans 883 residues: Translation initiation factor IF-2 (883 aa).

The tract at residues 118-261 (VARESEAAPA…KKKEAFKKTE (144 aa)) is disordered. The span at 124-150 (AAPAEEPVAAAVKPASEPPVVQKAPVA) shows a compositional bias: low complexity. 2 stretches are compositionally biased toward basic and acidic residues: residues 183-200 (PADRREATAPKKRIEERI) and 252-261 (KKKEAFKKTE). One can recognise a tr-type G domain in the interval 383-552 (KRPPVVTIMG…LLQADVMDLK (170 aa)). The tract at residues 392–399 (GHVDHGKT) is G1. 392–399 (GHVDHGKT) is a binding site for GTP. A G2 region spans residues 417–421 (GITQH). Residues 438–441 (DTPG) are G3. Residues 438–442 (DTPGH) and 492–495 (NKID) contribute to the GTP site. The G4 stretch occupies residues 492-495 (NKID). The segment at 528-530 (SAK) is G5.

The protein belongs to the TRAFAC class translation factor GTPase superfamily. Classic translation factor GTPase family. IF-2 subfamily.

It is found in the cytoplasm. Functionally, one of the essential components for the initiation of protein synthesis. Protects formylmethionyl-tRNA from spontaneous hydrolysis and promotes its binding to the 30S ribosomal subunits. Also involved in the hydrolysis of GTP during the formation of the 70S ribosomal complex. This chain is Translation initiation factor IF-2, found in Geobacter sulfurreducens (strain ATCC 51573 / DSM 12127 / PCA).